We begin with the raw amino-acid sequence, 397 residues long: MYNYPDERGYFGPFGGKFVPETLMYALEELEEKYRELKSDPEFQKELDYYLREYAGRPTPLYFAEKLTKYVGGAKIYLKREDLLHTGAHKINNTIGQCLLTKRMGKKRVIAETGAGQHGVATATASALFGLECVVYMGEEDAERQALNVFRMKLLGAKVEIVKSGSRTLKDAINEALRDWVTNVESTHYVIGSVVGPHPFPMIVRDFQSVIGRETKEQILQKEGRLPDAIVACVGGGSNAMGIFYPFVEDKGVQLIGVEAGGYGLETGQHAASICGGSVGILHGMKSYFLQDEEGQIQPTHSISAGLDYPGVGPEHALFHEIKRAKYTTATDEEALEGFKLLARTEGIIPALESAHAVIKAVEVARELGKDGIVVINLSGRGDKDMAHVMKHLSLEG.

Position 90 is an N6-(pyridoxal phosphate)lysine (Lys-90).

Belongs to the TrpB family. As to quaternary structure, tetramer of two alpha and two beta chains. Pyridoxal 5'-phosphate is required as a cofactor.

It carries out the reaction (1S,2R)-1-C-(indol-3-yl)glycerol 3-phosphate + L-serine = D-glyceraldehyde 3-phosphate + L-tryptophan + H2O. It functions in the pathway amino-acid biosynthesis; L-tryptophan biosynthesis; L-tryptophan from chorismate: step 5/5. The beta subunit is responsible for the synthesis of L-tryptophan from indole and L-serine. The polypeptide is Tryptophan synthase beta chain 1 (trpB1) (Aquifex aeolicus (strain VF5)).